The sequence spans 827 residues: MTKLNAQVKGSLNVTTPGVQIWRIEAMQMVPVSSSTYGSFFDGDCYIVLAIHKTGSNLSYDIHYWIGQDSSQDEQGAAAIYTTLMDDFLKGRAVQHREVQGNESEAFRGYFKQGIVIRKGGVASGMKKVETNSYDIQRLLHVKGKRNVVAGEVEMSWKSFNRGDVFLLDLGKLIIQWNGPESNRMERLRGMTLAKEIRDQERGGRTYVGVVDGEDEKASPQLMEIMNYVLGQRKELKAAVPDTVVEPALKAALKLYHVSDSEGKVVVREVATRPLTQDLLSHEDCYILDQGGLKIYVWKGKNANPQEKKEAMNQALNFIKAKQYPPSTQVEVQNDGAESAVFQQLFQKWTVPNQTSGLGKTHTVGSVAKVEQVKFDATSMHVQPQVAAQQKMVDDGSGEVEIWRIENLDLVPVESKWVGHFYGGDCYLLLYTYLIGEKQHYLLYIWQGSQASQDEITASAYQAVILDQKYNNEPVQIRVPMGKEPPHLMSIFKGRMVVYQGGTSRANSTEPVPSTRLFQVRGTSVNNTKAFEVPARATSLNSNDIFVLKTQSCCYLWCGKGCSGDEREMAKMVADTISRTEKQVVVEGQEPANFWVALGGKAPYASSKRLQEETLVITPRLFECSNQTGRFLATEIPDFNQDDLEEDDVFLLDVWDQVFFWIGKNANEDEKKAAAVTAQEYLKTHPSGRDPETPIIVVKQGYEPPTFTGWFLAWDPFKWSDSKSYEDLKAELGNSGDWSQITAEIKNPKPDVFNANTNLSSGPLPIFPLEQLVNKPAEELPQGVDPSRREEHLSIEDFTKALGMTPAAFSALPRWKQQNLKKEKGLF.

The interval 1-126 (MTKLNAQVKG…IRKGGVASGM (126 aa)) is necessary for homodimerization. Positions 1 to 734 (MTKLNAQVKG…YEDLKAELGN (734 aa)) are core. One copy of the Gelsolin-like 1 repeat lies at 28–107 (QMVPVSSSTY…EVQGNESEAF (80 aa)). 2 LPA/PIP2-binding site regions span residues 112-119 (KQGIVIRK) and 138-146 (RLLHVKGKR). Gelsolin-like repeat units lie at residues 148 to 216 (VVAG…GEDE) and 269 to 342 (EVAT…SAVF). S366 carries the phosphoserine modification. Gelsolin-like repeat units lie at residues 409-489 (DLVP…PHLM), 528-595 (TKAF…ANFW), and 634-707 (TEIP…PPTF). S735 is subject to Phosphoserine. Residues 761-827 (SGPLPIFPLE…QNLKKEKGLF (67 aa)) form the HP domain. The segment at 816–824 (KQQNLKKEK) is LPA/PIP2-binding site 3.

Belongs to the villin/gelsolin family. As to quaternary structure, monomer. Homodimer; homodimerization is necessary for actin-bundling. Associates with F-actin; phosphorylation at tyrosine residues decreases the association with F-actin. Interacts (phosphorylated at C-terminus tyrosine phosphorylation sites) with PLCG1 (via the SH2 domains). Interacts (phosphorylated form) with PLCG1; the interaction is enhanced by hepatocyte growth factor (HGF). In terms of processing, phosphorylated on tyrosine residues by SRC. The unphosphorylated form increases the initial rate of actin-nucleating activity, whereas the tyrosine-phosphorylated form inhibits actin-nucleating activity, enhances actin-bundling activity and enhances actin-severing activity by reducing high Ca(2+) requirements. The tyrosine-phosphorylated form does not regulate actin-capping activity. Tyrosine phosphorylation is essential for cell migration: tyrosine phosphorylation sites in the N-terminus half regulate actin reorganization and cell morphology, whereas tyrosine phosphorylation sites in the C-terminus half regulate cell migration. Tyrosine phosphorylation is induced by epidermal growth factor (EGF) and stimulates cell migration.

The protein localises to the cytoplasm. It is found in the cytoskeleton. The protein resides in the cell projection. Its subcellular location is the lamellipodium. It localises to the ruffle. The protein localises to the microvillus. It is found in the filopodium tip. The protein resides in the filopodium. Its function is as follows. Epithelial cell-specific Ca(2+)-regulated actin-modifying protein that modulates the reorganization of microvillar actin filaments. Plays a role in the actin nucleation, actin filament bundle assembly, actin filament capping and severing. Binds phosphatidylinositol 4,5-bisphosphate (PIP2) and lysophosphatidic acid (LPA); binds LPA with higher affinity than PIP2. Binding to LPA increases its phosphorylation by SRC and inhibits all actin-modifying activities. Binding to PIP2 inhibits actin-capping and -severing activities but enhances actin-bundling activity. Regulates the intestinal epithelial cell morphology, cell invasion, cell migration and apoptosis. Protects against apoptosis induced by dextran sodium sulfate (DSS) in the gastrointestinal epithelium. Appears to regulate cell death by maintaining mitochondrial integrity. Enhances hepatocyte growth factor (HGF)-induced epithelial cell motility, chemotaxis and wound repair. The sequence is that of Villin-1 (VIL1) from Sus scrofa (Pig).